We begin with the raw amino-acid sequence, 636 residues long: MPMITITLPDGSRREFDAPVSVMQVAQSIGAGLAKATIAGQVDGQLVDASDLIEHDASLRIITAKDAEGVEIIRHSCAHLVGHAVKQLYPDVKMVIGPVIAEGFYYDIYSERPFTPEDMAAIEQRMQQLIAQDYDVIKKVTPRAEVIEVFAQRGEEYKLRLIEDMSDDITAMGLYYHQEYVDMCRGPHVPNTRFLKAFKLTRISGAYWRGDAKNEQLQRIYGTAWADKKQLDAYILRMEEADKRDHRKIGKAQDLFHLQEEAPGLVFWHPKGWSLWQVVEQYMRKVYRDSGYGEVRCPQILDVSLWQKSGHWDNYQDAMFFTESEKRTYAVKPMNCPGHVQVFNQGLHSYRDLPIRYGEFGACHRNEPSGALHGILRVRGFTQDDGHVFCLESQIEAEVTAFHQQALAVYTAFGFDDIQIKIALRPEKRLGDDATWDKAEAALRSALGVCGVEWQELPGEGAFYGPKIEYHLKDAIGRTWQLGTMQVDFMMPGRLGAEYVDEHSQKKHPVMLHRAIVGSMERFIGILIEHHAGAFPAWLAPVQVVVANITDAQAEYVDSVRKTLANQGFRVSADLRNEKIGYKIREHTLQRVPYLLVVGDREKENGAVAVRTRSGEDLGTMTVSAFIERLQAEQAA.

The region spanning Met1–Thr63 is the TGS domain. The catalytic stretch occupies residues Asp245–Pro536. The Zn(2+) site is built by Cys336, His387, and His513.

Belongs to the class-II aminoacyl-tRNA synthetase family. As to quaternary structure, homodimer. It depends on Zn(2+) as a cofactor.

It is found in the cytoplasm. The catalysed reaction is tRNA(Thr) + L-threonine + ATP = L-threonyl-tRNA(Thr) + AMP + diphosphate + H(+). In terms of biological role, catalyzes the attachment of threonine to tRNA(Thr) in a two-step reaction: L-threonine is first activated by ATP to form Thr-AMP and then transferred to the acceptor end of tRNA(Thr). Also edits incorrectly charged L-seryl-tRNA(Thr). The sequence is that of Threonine--tRNA ligase from Xanthomonas campestris pv. campestris (strain 8004).